A 96-amino-acid chain; its full sequence is Protein Vpr (96 aa).

The interval 1-42 (MEQAPEDQGPQREPYNDWTLELLEELKNEAVRHFPRIWLHSL) is homooligomerization. Ser-79, Ser-94, and Ser-96 each carry phosphoserine; by host.

This sequence belongs to the HIV-1 VPR protein family. As to quaternary structure, homooligomer, may form homodimer. Interacts with p6-gag region of the Pr55 Gag precursor protein through a (Leu-X-X)4 motif near the C-terminus of the P6gag protein. Interacts with host UNG. May interact with host RAD23A/HHR23A. Interacts with host VPRBP/DCAF1, leading to hijack the CUL4A-RBX1-DDB1-DCAF1/VPRBP complex, mediating ubiquitination of host proteins such as TERT and ZGPAT and arrest of the cell cycle in G2 phase. Phosphorylated on several residues by host. These phosphorylations regulate VPR activity for the nuclear import of the HIV-1 pre-integration complex.

Its subcellular location is the virion. It localises to the host nucleus. The protein localises to the host extracellular space. Functionally, during virus replication, may deplete host UNG protein, and incude G2-M cell cycle arrest. Acts by targeting specific host proteins for degradation by the 26S proteasome, through association with the cellular CUL4A-DDB1 E3 ligase complex by direct interaction with host VPRPB/DCAF-1. Cell cycle arrest reportedly occurs within hours of infection and is not blocked by antiviral agents, suggesting that it is initiated by the VPR carried into the virion. Additionally, VPR induces apoptosis in a cell cycle dependent manner suggesting that these two effects are mechanistically linked. Detected in the serum and cerebrospinal fluid of AIDS patient, VPR may also induce cell death to bystander cells. In terms of biological role, during virus entry, plays a role in the transport of the viral pre-integration (PIC) complex to the host nucleus. This function is crucial for viral infection of non-dividing macrophages. May act directly at the nuclear pore complex, by binding nucleoporins phenylalanine-glycine (FG)-repeat regions. In Human immunodeficiency virus type 1 group M subtype B (strain 89.6) (HIV-1), this protein is Protein Vpr.